The chain runs to 222 residues: MRPDIKICGLKTPEAVDRALKRGATHIGFIFFEKSPRYIEPDLAAKLAEPARGKAKIVAVVVDPTNDELDEIVSLLKPDMLQLHGNESPEHVLTIKALYGLPVMKVFSVRTADDLKRVEAYIGIADRFLFDAKAPKGSELPGGNGISFDWSLLSWLDGSVDYMLSGGLNKDNVAEALFVTKAPGIDVSSGVETAPGVKSVAKIDEFFDAVEKANAPMMASGS.

This sequence belongs to the TrpF family.

The catalysed reaction is N-(5-phospho-beta-D-ribosyl)anthranilate = 1-(2-carboxyphenylamino)-1-deoxy-D-ribulose 5-phosphate. It functions in the pathway amino-acid biosynthesis; L-tryptophan biosynthesis; L-tryptophan from chorismate: step 3/5. The sequence is that of N-(5'-phosphoribosyl)anthranilate isomerase from Rhizobium johnstonii (strain DSM 114642 / LMG 32736 / 3841) (Rhizobium leguminosarum bv. viciae).